Consider the following 425-residue polypeptide: Glutamyl-tRNA reductase (425 aa).

Residues 49–52, S109, 114–116, and Q120 contribute to the substrate site; these read TCNR and EGQ. C50 (nucleophile) is an active-site residue. Position 189–194 (189–194) interacts with NADP(+); it reads GAGETG.

This sequence belongs to the glutamyl-tRNA reductase family. In terms of assembly, homodimer.

It catalyses the reaction (S)-4-amino-5-oxopentanoate + tRNA(Glu) + NADP(+) = L-glutamyl-tRNA(Glu) + NADPH + H(+). The protein operates within porphyrin-containing compound metabolism; protoporphyrin-IX biosynthesis; 5-aminolevulinate from L-glutamyl-tRNA(Glu): step 1/2. Its pathway is porphyrin-containing compound metabolism; chlorophyll biosynthesis. Its function is as follows. Catalyzes the NADPH-dependent reduction of glutamyl-tRNA(Glu) to glutamate 1-semialdehyde (GSA). The chain is Glutamyl-tRNA reductase from Pelodictyon phaeoclathratiforme (strain DSM 5477 / BU-1).